The primary structure comprises 203 residues: MTLVPYVVEDTGRGERAMDIYSRLLKDRIVMIGQEITEPLANTVIAQLLFLMSEDPKKDIQIFINSPGGYITAGLAIYDTIRFLGCDVNTYCIGQAASMGALLLSAGTKGKRHALPHSRMMIHQPSGGIIGTSADIQLQAAEILTLKKHLANILSECTGQPVEKIIEDSERDFFMGAEEAISYGLIDKVVTSAKETNKDTSST.

Catalysis depends on Ser98, which acts as the Nucleophile. Residue His123 is part of the active site.

Belongs to the peptidase S14 family. As to quaternary structure, fourteen ClpP subunits assemble into 2 heptameric rings which stack back to back to give a disk-like structure with a central cavity, resembling the structure of eukaryotic proteasomes.

It localises to the cytoplasm. It catalyses the reaction Hydrolysis of proteins to small peptides in the presence of ATP and magnesium. alpha-casein is the usual test substrate. In the absence of ATP, only oligopeptides shorter than five residues are hydrolyzed (such as succinyl-Leu-Tyr-|-NHMec, and Leu-Tyr-Leu-|-Tyr-Trp, in which cleavage of the -Tyr-|-Leu- and -Tyr-|-Trp bonds also occurs).. In terms of biological role, cleaves peptides in various proteins in a process that requires ATP hydrolysis. Has a chymotrypsin-like activity. Plays a major role in the degradation of misfolded proteins. The polypeptide is ATP-dependent Clp protease proteolytic subunit 2 (Chlamydia pneumoniae (Chlamydophila pneumoniae)).